The primary structure comprises 176 residues: Nascent polypeptide-associated complex subunit alpha (176 aa).

The region spanning P16–I80 is the NAC-A/B domain. A disordered region spans residues A83–A110. The span at T91–A110 shows a compositional bias: basic and acidic residues. The UBA domain maps to L138 to L175.

It belongs to the NAC-alpha family. Part of the nascent polypeptide-associated complex (NAC), consisting of EGD2 and EGD1. NAC associates with ribosomes via EGD1.

The protein resides in the cytoplasm. Its subcellular location is the nucleus. Component of the nascent polypeptide-associated complex (NAC), a dynamic component of the ribosomal exit tunnel, protecting the emerging polypeptides from interaction with other cytoplasmic proteins to ensure appropriate nascent protein targeting. The NAC complex also promotes mitochondrial protein import by enhancing productive ribosome interactions with the outer mitochondrial membrane and blocks the inappropriate interaction of ribosomes translating non-secretory nascent polypeptides with translocation sites in the membrane of the endoplasmic reticulum. EGD2 may also be involved in transcription regulation. The polypeptide is Nascent polypeptide-associated complex subunit alpha (EGD2) (Scheffersomyces stipitis (strain ATCC 58785 / CBS 6054 / NBRC 10063 / NRRL Y-11545) (Yeast)).